A 554-amino-acid chain; its full sequence is MFS-type transporter tstD (554 aa).

Polar residues-rich tracts occupy residues 1 to 10 (MPEPFNSTMP) and 27 to 38 (QDSNQPPEMSAS). Positions 1–68 (MPEPFNSTMP…ESENNEPYSV (68 aa)) are disordered. N-linked (GlcNAc...) asparagine glycosylation occurs at Asn6. A compositionally biased stretch (basic and acidic residues) spans 39 to 48 (SEKKHPENEN). Residues 76-96 (LMVLAASLAGFFSPLSASIYY) form a helical membrane-spanning segment. N-linked (GlcNAc...) asparagine glycans are attached at residues Asn107 and Asn114. 5 helical membrane-spanning segments follow: residues 115 to 135 (LTVT…ASFS), 142 to 162 (PGYA…ALQN), 173 to 193 (LQSA…SDII), 202 to 222 (IAFA…IGGL), and 231 to 251 (WIFW…FLFF). The disordered stretch occupies residues 281–300 (KEKQRQQRAENEEENANRQR). The next 3 membrane-spanning stretches (helical) occupy residues 311–331 (VFVV…GVAF), 354–374 (IKVA…ALST), and 413–433 (IALP…WLMT). An N-linked (GlcNAc...) asparagine glycan is attached at Asn437. The next 3 membrane-spanning stretches (helical) occupy residues 442–462 (IILL…LNVL), 473–493 (MVTA…AAMI), and 504–524 (WSYT…LLTM).

It belongs to the major facilitator superfamily.

Its subcellular location is the membrane. Its function is as follows. MFS-type transporter; part of the gene cluster that mediates the biosynthesis of the antihypercholesterolemic agents phomoidrides which are dimeric anhydrides. The polypeptide is MFS-type transporter tstD (Talaromyces stipitatus (strain ATCC 10500 / CBS 375.48 / QM 6759 / NRRL 1006) (Penicillium stipitatum)).